We begin with the raw amino-acid sequence, 421 residues long: Thymidine phosphorylase (421 aa).

It belongs to the thymidine/pyrimidine-nucleoside phosphorylase family. Homodimer.

It catalyses the reaction thymidine + phosphate = 2-deoxy-alpha-D-ribose 1-phosphate + thymine. In terms of biological role, the enzymes which catalyze the reversible phosphorolysis of pyrimidine nucleosides are involved in the degradation of these compounds and in their utilization as carbon and energy sources, or in the rescue of pyrimidine bases for nucleotide synthesis. The polypeptide is Thymidine phosphorylase (deoA) (Mycoplasma genitalium (strain ATCC 33530 / DSM 19775 / NCTC 10195 / G37) (Mycoplasmoides genitalium)).